The primary structure comprises 41 residues: Pi-stichotoxin-Hcr5a (41 aa).

3 disulfides stabilise this stretch: C4-C37, C6-C30, and C20-C38.

Belongs to the sea anemone type 3 (BDS) potassium channel toxin family.

Its subcellular location is the secreted. It localises to the nematocyst. Functionally, weakly inhibits human homomeric ASIC3 (IC(50)=5.5 uM). This chain is Pi-stichotoxin-Hcr5a, found in Radianthus crispa (Leathery sea anemone).